The following is a 71-amino-acid chain: UPF0435 protein BPUM_0734 (71 aa).

The protein belongs to the UPF0435 family.

This chain is UPF0435 protein BPUM_0734, found in Bacillus pumilus (strain SAFR-032).